Here is a 350-residue protein sequence, read N- to C-terminus: Arginine N-succinyltransferase (350 aa).

Leucine 125 contacts succinyl-CoA. The Proton donor role is filled by histidine 229.

This sequence belongs to the arginine N-succinyltransferase family.

It catalyses the reaction succinyl-CoA + L-arginine = N(2)-succinyl-L-arginine + CoA + H(+). Its pathway is amino-acid degradation; L-arginine degradation via AST pathway; L-glutamate and succinate from L-arginine: step 1/5. In terms of biological role, catalyzes the transfer of succinyl-CoA to arginine to produce N(2)-succinylarginine. This Yersinia pseudotuberculosis serotype IB (strain PB1/+) protein is Arginine N-succinyltransferase.